Reading from the N-terminus, the 300-residue chain is Glycine betaine/carnitine transport binding protein GbuC (300 aa).

The N-terminal stretch at 1–20 is a signal peptide; that stretch reads MLKKLITTAVLAMLIFTLAA. C21 carries N-palmitoyl cysteine lipidation. Residue C21 is the site of S-diacylglycerol cysteine attachment.

In terms of assembly, the complex is composed of two ATP-binding proteins (GbuA), two transmembrane proteins (GbuB) and a solute-binding protein (GbuC).

The protein resides in the cell membrane. With respect to regulation, the complex is activated by an osmotic gradient or by low temperature. In terms of biological role, part of the ABC transporter complex GbuABC involved in glycine betaine uptake. Involved, with BetL and OpuC, in osmoprotection and cryoprotection of Listeria. Can also uptake carnitine when carnitine is abundant in the growth medium. The chain is Glycine betaine/carnitine transport binding protein GbuC (gbuC) from Listeria monocytogenes serotype 1/2a (strain 10403S).